A 66-amino-acid chain; its full sequence is Cytochrome c oxidase subunit 26, mitochondrial (66 aa).

The N-terminal 8 residues, 1–8, are a transit peptide targeting the mitochondrion; it reads MFFSQVLR. Topologically, residues 9 to 27 are mitochondrial matrix; that stretch reads SSARAAPIKRYTGGRIGES. Residues 28–64 form a helical membrane-spanning segment; sequence WVITEGRRLIPEIFQWSAVLSVCLGWPGAVYFFSKAR. Residues 65–66 are Mitochondrial intermembrane-facing; it reads KA.

It belongs to the fungal cytochrome c oxidase subunit 26 family. In terms of assembly, component of the cytochrome c oxidase (complex IV, CIV), a multisubunit enzyme composed of 12 subunits. The complex is composed of a catalytic core of 3 subunits COX1, COX2 and COX3, encoded in the mitochondrial DNA, and 9 supernumerary subunits COX4, COX5A (or COX5B), COX6, COX7, COX8, COX9, COX12, COX13 and COX26, which are encoded in the nuclear genome. The complex exists as a monomer or a dimer and forms supercomplexes (SCs) in the inner mitochondrial membrane with a dimer of ubiquinol-cytochrome c oxidoreductase (cytochrome b-c1 complex, complex III, CIII), resulting in 2 different assemblies (supercomplexes III(2)IV and III(2)IV(2)).

It localises to the mitochondrion inner membrane. Its function is as follows. Component of the cytochrome c oxidase, the last enzyme in the mitochondrial electron transport chain which drives oxidative phosphorylation. The respiratory chain contains 3 multisubunit complexes succinate dehydrogenase (complex II, CII), ubiquinol-cytochrome c oxidoreductase (cytochrome b-c1 complex, complex III, CIII) and cytochrome c oxidase (complex IV, CIV), that cooperate to transfer electrons derived from NADH and succinate to molecular oxygen, creating an electrochemical gradient over the inner membrane that drives transmembrane transport and the ATP synthase. Cytochrome c oxidase is the component of the respiratory chain that catalyzes the reduction of oxygen to water. Electrons originating from reduced cytochrome c in the intermembrane space (IMS) are transferred via the dinuclear copper A center (CU(A)) of COX2 and heme A of COX1 to the active site in COX1, a binuclear center (BNC) formed by heme A3 and copper B (CU(B)). The BNC reduces molecular oxygen to 2 water molecules using 4 electrons from cytochrome c in the IMS and 4 protons from the mitochondrial matrix. The chain is Cytochrome c oxidase subunit 26, mitochondrial (COX26) from Saccharomyces cerevisiae (strain ATCC 204508 / S288c) (Baker's yeast).